Here is a 331-residue protein sequence, read N- to C-terminus: XylDLEGF operon transcriptional activator 1 (331 aa).

Residues 214-315 enclose the HTH araC/xylS-type domain; sequence ERVVQFIEEN…GELPSDTLRR (102 aa). 2 DNA-binding regions (H-T-H motif) span residues 231 to 252 and 282 to 305; these read ERLA…EKHA and VTEM…RSTF.

The protein resides in the cytoplasm. Regulatory protein of the TOL plasmid xyl operons. XylS activates the xylXYZLTEGFJQKIH operon required for the degradation of toluene, m-xylene and p-xylene. This Pseudomonas putida (Arthrobacter siderocapsulatus) protein is XylDLEGF operon transcriptional activator 1 (xylS1).